We begin with the raw amino-acid sequence, 431 residues long: Enolase (431 aa).

Glutamine 167 provides a ligand contact to (2R)-2-phosphoglycerate. The Proton donor role is filled by glutamate 209. Residues aspartate 246, glutamate 289, and aspartate 316 each coordinate Mg(2+). Residues lysine 341, arginine 370, serine 371, and lysine 392 each contribute to the (2R)-2-phosphoglycerate site. Lysine 341 acts as the Proton acceptor in catalysis.

It belongs to the enolase family. As to quaternary structure, component of the RNA degradosome, a multiprotein complex involved in RNA processing and mRNA degradation. Mg(2+) serves as cofactor.

It is found in the cytoplasm. The protein localises to the secreted. Its subcellular location is the cell surface. It carries out the reaction (2R)-2-phosphoglycerate = phosphoenolpyruvate + H2O. It functions in the pathway carbohydrate degradation; glycolysis; pyruvate from D-glyceraldehyde 3-phosphate: step 4/5. Its function is as follows. Catalyzes the reversible conversion of 2-phosphoglycerate (2-PG) into phosphoenolpyruvate (PEP). It is essential for the degradation of carbohydrates via glycolysis. The chain is Enolase from Marinobacter nauticus (strain ATCC 700491 / DSM 11845 / VT8) (Marinobacter aquaeolei).